The following is an 899-amino-acid chain: 1,4-alpha-glucan-branching enzyme 3, chloroplastic/amyloplastic (899 aa).

Residues 1-49 (MVSLSNQTRFSFHPNNLVVSEKRRLGISGVNFPRKIKLKITCFAAERPR) constitute a chloroplast transit peptide. The interval 47–67 (RPRQEKQKKKSQSQSTSDAEA) is disordered. Glu612 (proton donor) is an active-site residue.

The protein belongs to the glycosyl hydrolase 13 family. GlgB subfamily. As to quaternary structure, monomer. In terms of tissue distribution, mostly expressed in flowers and inflorescence, and, to a lower extent, in seedlings, roots, stems, leaves, siliques and seeds.

The protein localises to the plastid. Its subcellular location is the chloroplast stroma. The protein resides in the amyloplast. It catalyses the reaction Transfers a segment of a (1-&gt;4)-alpha-D-glucan chain to a primary hydroxy group in a similar glucan chain.. It participates in glycan biosynthesis; starch biosynthesis. Catalyzes the formation of the alpha-1,6-glucosidic linkages in starch by scission of a 1,4-alpha-linked oligosaccharide from growing alpha-1,4-glucan chains and the subsequent attachment of the oligosaccharide to the alpha-1,6 position. Essential during embryogenesis. The protein is 1,4-alpha-glucan-branching enzyme 3, chloroplastic/amyloplastic (SBE3) of Arabidopsis thaliana (Mouse-ear cress).